A 212-amino-acid chain; its full sequence is Golgi SNAP receptor complex member 2 homolog memb-1 (212 aa).

The Cytoplasmic portion of the chain corresponds to 1 to 189; the sequence is MEAQYQSTNF…QVIDRRVRED (189 aa). Residues 190–210 form a helical; Anchor for type IV membrane protein membrane-spanning segment; the sequence is WIFVIGCIVCCIFMYAFYRFW. Residues 211 to 212 are Vesicular-facing; sequence RG.

This sequence belongs to the GOSR2 family. As to quaternary structure, part of a unique SNARE complex.

The protein localises to the golgi apparatus. The protein resides in the cis-Golgi network membrane. It is found in the golgi apparatus membrane. Its subcellular location is the endoplasmic reticulum membrane. In terms of biological role, involved in transport of proteins from the cis/medial-Golgi to the trans-Golgi network. The polypeptide is Golgi SNAP receptor complex member 2 homolog memb-1 (Caenorhabditis briggsae).